The primary structure comprises 552 residues: Steroid transmembrane transporter SLC22A24 (552 aa).

The next 12 helical transmembrane spans lie at 16 to 36 (FQIL…PHIL), 146 to 166 (SVVQ…FGYL), 174 to 194 (MICS…AFAP), 204 to 224 (FLAG…VIEW), 235 to 255 (TLLL…AFVI), 260 to 280 (TLQL…RWLV), 349 to 369 (IVLY…GLIF), 380 to 400 (LFQV…LLVM), 407 to 427 (ISQV…TFLD), 436 to 456 (ILAT…SVHF), 473 to 493 (ILFS…VGFS), and 495 to 515 (YLPW…VLLL).

This sequence belongs to the major facilitator (TC 2.A.1) superfamily. Organic cation transporter (TC 2.A.1.19) family.

Its subcellular location is the cell membrane. The enzyme catalyses estrone 3-sulfate(out) + glutarate(in) = estrone 3-sulfate(in) + glutarate(out). It carries out the reaction 17beta-estradiol 17-O-(beta-D-glucuronate)(out) + glutarate(in) = 17beta-estradiol 17-O-(beta-D-glucuronate)(in) + glutarate(out). It catalyses the reaction 5alpha-androstane-3alpha,17beta-diol 3-O-(beta-D-glucuronate)(out) + glutarate(in) = 5alpha-androstane-3alpha,17beta-diol 3-O-(beta-D-glucuronate)(in) + glutarate(out). The catalysed reaction is dehydroepiandrosterone 3-sulfate(out) + glutarate(in) = dehydroepiandrosterone 3-sulfate(in) + glutarate(out). The enzyme catalyses glutarate(in) + succinate(out) = glutarate(out) + succinate(in). Renal transmembrane organic anion/dicarboxylate exchanger that participates in the reabsorption of conjugated steroids, as well as bile acids, driven by an outward gradient of dicarboxylates such as glutarate or succinate. Transports androstanediol glucuronide (5alpha-androstane-3alpha,17beta-diol 3-O-(beta-D-glucuronate)), estrone 3-sulfate, and estradiol-17-glucuronide (17beta-estradiol 17-O-(beta-D-glucuronate)), but not taurocholate. The sequence is that of Steroid transmembrane transporter SLC22A24 from Microcebus murinus (Gray mouse lemur).